The sequence spans 312 residues: MNELRIVFMGSPEFALTPLKMLLAEGYAICGVYTQPDRPAGRGRELCPPPVKALALERGLAVYQPQSLKKPEEQAVLSGLKPDVIVVAAYGLILPQAVLDIPAYGVLNIHPSLLPRYRGATPVAATLLGGDEWAGVSLMKLEAGLDTGPVYSRAAIPVRPEDTTPLLADKLAFIGGCLLLELLSRIPSLPQPELQDNAKATYFGMVTKDMGQVNWQTPAAEIERRVRAFFPWPGVFTSYNQKTLKILEARPQKLGLGLQPSQVRVYEGDRIMVGSASGELEIIRLQLEGKAACSAADFLRGQRHFDGVNLGV.

Residue 112–115 (SLLP) participates in (6S)-5,6,7,8-tetrahydrofolate binding.

The protein belongs to the Fmt family.

The enzyme catalyses L-methionyl-tRNA(fMet) + (6R)-10-formyltetrahydrofolate = N-formyl-L-methionyl-tRNA(fMet) + (6S)-5,6,7,8-tetrahydrofolate + H(+). Its function is as follows. Attaches a formyl group to the free amino group of methionyl-tRNA(fMet). The formyl group appears to play a dual role in the initiator identity of N-formylmethionyl-tRNA by promoting its recognition by IF2 and preventing the misappropriation of this tRNA by the elongation apparatus. This Dehalococcoides mccartyi (strain ATCC BAA-2266 / KCTC 15142 / 195) (Dehalococcoides ethenogenes (strain 195)) protein is Methionyl-tRNA formyltransferase.